A 220-amino-acid chain; its full sequence is ATP-dependent Clp protease proteolytic subunit (220 aa).

The active-site Nucleophile is the S125. The active site involves H150.

The protein belongs to the peptidase S14 family. Fourteen ClpP subunits assemble into 2 heptameric rings which stack back to back to give a disk-like structure with a central cavity, resembling the structure of eukaryotic proteasomes.

The protein localises to the cytoplasm. The enzyme catalyses Hydrolysis of proteins to small peptides in the presence of ATP and magnesium. alpha-casein is the usual test substrate. In the absence of ATP, only oligopeptides shorter than five residues are hydrolyzed (such as succinyl-Leu-Tyr-|-NHMec, and Leu-Tyr-Leu-|-Tyr-Trp, in which cleavage of the -Tyr-|-Leu- and -Tyr-|-Trp bonds also occurs).. Its function is as follows. Cleaves peptides in various proteins in a process that requires ATP hydrolysis. Has a chymotrypsin-like activity. Plays a major role in the degradation of misfolded proteins. The protein is ATP-dependent Clp protease proteolytic subunit of Bacteroides thetaiotaomicron (strain ATCC 29148 / DSM 2079 / JCM 5827 / CCUG 10774 / NCTC 10582 / VPI-5482 / E50).